The primary structure comprises 1097 residues: RE1-silencing transcription factor (1097 aa).

Residues 32–122 are interaction with SIN3A; that stretch reads DLHDLSKAEL…SLELSVVEPQ (91 aa). Positions 43-57 are interaction with SIN3B; that stretch reads APQLIMLANVALTGE. 2 disordered regions span residues 83–103 and 127–159; these read NFSD…KGEP and ASGA…TKPF. Acidic residues predominate over residues 86 to 96; it reads DSEEGEGLEES. The segment at 145 to 418 is interaction with ZFP90; it reads PGAEDKGKSS…KSKHPTCPNK (274 aa). The C2H2-type 1 zinc finger occupies 159-181; that stretch reads FRCKPCQYEAESEEQFVHHIRVH. The required for binding to the neuron-restrictive silencer element stretch occupies residues 201–212; it reads SGSSTAEEGDFS. C2H2-type zinc fingers lie at residues 216–238, 248–270, 276–298, 304–326, 332–355, 361–383, and 389–412; these read IRCD…LKHH, YKCI…LRNH, YTCG…VRTH, YKCE…MRTH, FKCD…RQVH, LNCP…VELH, and FNCP…KSKH. Positions 452–479 are enriched in basic and acidic residues; the sequence is KIKGDVAGKKNEKSVKAEKRDVSKEKKP. Disordered stretches follow at residues 452–642, 774–837, 853–938, and 961–1049; these read KIKG…MEGA, KEPV…EQVL, ESVS…NGKH, and GINS…NAKE. Over residues 480–490 the composition is skewed to polar residues; the sequence is SNNVSVIQVTT. Composition is skewed to basic and acidic residues over residues 495-504 and 559-570; these read SVTEVKEMDV and PKGDSKVEENKK. Over residues 577–593 the composition is skewed to basic residues; it reads KSTKKKTLKNKSSKKSS. A compositionally biased stretch (basic and acidic residues) spans 803–836; it reads PPLHMEPISKKPPLRKDKKEKSNMQSERARKEQV. Ser864 is modified (phosphoserine). The segment covering 913-930 has biased composition (polar residues); that stretch reads INESTHISSSGQNLNTPE. Ser971 bears the Phosphoserine mark. An interaction with RCOR1 region spans residues 1009-1087; sequence EGIHSHEGSD…HLNRHLVNVY (79 aa). The C2H2-type 9 zinc-finger motif lies at 1060–1082; the sequence is FVCIFCDRSFRKGKDYSKHLNRH.

In terms of assembly, isoform 1 and isoform 3 form heterodimers. Isoform 3: Forms homodimers and homooligomers; binds to the neuron-restrictive silencer element (NRSE) as monomer. Interacts with SIN3A, SIN3B and RCOR1. Interacts with CDYL. Interacts with EHMT1 and EHMT2 only in the presence of CDYL. Part of a complex containing at least CDYL, REST, WIZ, SETB1, EHMT1 and EHMT2. Interacts (via zinc-finger DNA-binding domain) with ZFP90 (via N- and C-termini); the interaction inhibits REST repressor activity. Interacts (via C2H2-type zinc finger 5) with PRICKLE1. Interacts with FBXW11 and BTRC. Interacts with USP7. Post-translationally, O-glycosylated. In terms of processing, phosphorylated; phosphorylation is required for ubiquitination. Ubiquitinated; ubiquitination is mediated by BTRC and leads to proteasomal degradation in G2 phase. Ubiquitination increases during neuronal differentiation. Deubiquitinated by USP7; leading to its stabilization and promoting the maintenance of neural progenitor cells. In terms of tissue distribution, expressed in neurons of the prefrontal cortex, in hippocampal pyramidal neurons, dentate gyrus granule neurons and cerebellar Purkinje and granule neurons (at protein level). Expressed in dopaminergic neurons of the substantia nigra (at protein level). Expressed in neural progenitor cells (at protein level). In patients suffering from Alzheimer disease, frontotemporal dementia or dementia with Lewy bodies, decreased nuclear levels have been observed in neurons of the prefrontal cortex and the hippocampus, but not in neurons of the dentate gyrus and cerebellum (at protein level). In patients with Parkinson disease or dementia with Lewy bodies, decreased nuclear levels have been observed in dopaminergic neurons and in cortical neurons and localization to Lewy bodies and pale bodies was detected (at protein level). Expressed at higher levels in weakly invasive breast cancer cell lines and at lower levels in highly invasive breast cancer lines (at protein level). Ubiquitous. Expressed at higher levels in the tissues of the lymphocytic compartment, including spleen, thymus, peripheral blood lymphocytes and ovary.

The protein localises to the nucleus. It localises to the cytoplasm. Transcriptional repressor which binds neuron-restrictive silencer element (NRSE) and represses neuronal gene transcription in non-neuronal cells. Restricts the expression of neuronal genes by associating with two distinct corepressors, SIN3A and RCOR1, which in turn recruit histone deacetylase to the promoters of REST-regulated genes. Mediates repression by recruiting the BHC complex at RE1/NRSE sites which acts by deacetylating and demethylating specific sites on histones, thereby acting as a chromatin modifier. Transcriptional repression by REST-CDYL via the recruitment of histone methyltransferase EHMT2 may be important in transformation suppression. Represses the expression of SRRM4 in non-neural cells to prevent the activation of neural-specific splicing events and to prevent production of REST isoform 3. Repressor activity may be inhibited by forming heterodimers with isoform 3, thereby preventing binding to NRSE or binding to corepressors and leading to derepression of target genes. Also maintains repression of neuronal genes in neural stem cells, and allows transcription and differentiation into neurons by dissociation from RE1/NRSE sites of target genes. Thereby is involved in maintaining the quiescent state of adult neural stem cells and preventing premature differentiation into mature neurons. Plays a role in the developmental switch in synaptic NMDA receptor composition during postnatal development, by repressing GRIN2B expression and thereby altering NMDA receptor properties from containing primarily GRIN2B to primarily GRIN2A subunits. Acts as a regulator of osteoblast differentiation. Key repressor of gene expression in hypoxia; represses genes in hypoxia by direct binding to an RE1/NRSE site on their promoter regions. May also function in stress resistance in the brain during aging; possibly by regulating expression of genes involved in cell death and in the stress response. Repressor of gene expression in the hippocampus after ischemia by directly binding to RE1/NRSE sites and recruiting SIN3A and RCOR1 to promoters of target genes, thereby promoting changes in chromatin modifications and ischemia-induced cell death. After ischemia, might play a role in repression of miR-132 expression in hippocampal neurons, thereby leading to neuronal cell death. Negatively regulates the expression of SRRM3 in breast cancer cell lines. In terms of biological role, binds to the 3' region of the neuron-restrictive silencer element (NRSE), with lower affinity than full-length REST isoform 1. Exhibits weaker repressor activity compared to isoform 1. May negatively regulate the repressor activity of isoform 1 by binding to isoform 1, thereby preventing its binding to NRSE and leading to derepression of target genes. However, in another study, does not appear to be implicated in repressor activity of a NRSE motif-containing reporter construct nor in inhibitory activity on the isoform 1 transcriptional repressor activity. Post-transcriptional inactivation of REST by SRRM4-dependent alternative splicing into isoform 3 is required in mechanosensory hair cells in the inner ear for derepression of neuronal genes and hearing. In Homo sapiens (Human), this protein is RE1-silencing transcription factor (REST).